The chain runs to 453 residues: Bifunctional protein GlmU (453 aa).

The interval 1–231 (MERTCLAVIL…EIEMTGCNNR (231 aa)) is pyrophosphorylase. UDP-N-acetyl-alpha-D-glucosamine contacts are provided by residues 10 to 13 (LAAG), Lys24, Gln77, 82 to 83 (GT), 105 to 107 (YGD), Gly143, Glu157, Asn172, and Asn229. Asp107 contacts Mg(2+). Asn229 contributes to the Mg(2+) binding site. Positions 232–252 (AELAVIERFWQERRRREMMLA) are linker. Residues 253 to 453 (GVTMIAPETV…AIKAAKRAKA (201 aa)) are N-acetyltransferase. UDP-N-acetyl-alpha-D-glucosamine contacts are provided by Arg318 and Lys336. His348 serves as the catalytic Proton acceptor. UDP-N-acetyl-alpha-D-glucosamine-binding residues include Tyr351 and Asn362. Acetyl-CoA is bound by residues Ala365, 371 to 372 (NY), Ser390, Ser408, and Arg425.

The protein in the N-terminal section; belongs to the N-acetylglucosamine-1-phosphate uridyltransferase family. This sequence in the C-terminal section; belongs to the transferase hexapeptide repeat family. In terms of assembly, homotrimer. Mg(2+) is required as a cofactor.

It localises to the cytoplasm. The enzyme catalyses alpha-D-glucosamine 1-phosphate + acetyl-CoA = N-acetyl-alpha-D-glucosamine 1-phosphate + CoA + H(+). The catalysed reaction is N-acetyl-alpha-D-glucosamine 1-phosphate + UTP + H(+) = UDP-N-acetyl-alpha-D-glucosamine + diphosphate. Its pathway is nucleotide-sugar biosynthesis; UDP-N-acetyl-alpha-D-glucosamine biosynthesis; N-acetyl-alpha-D-glucosamine 1-phosphate from alpha-D-glucosamine 6-phosphate (route II): step 2/2. The protein operates within nucleotide-sugar biosynthesis; UDP-N-acetyl-alpha-D-glucosamine biosynthesis; UDP-N-acetyl-alpha-D-glucosamine from N-acetyl-alpha-D-glucosamine 1-phosphate: step 1/1. It participates in bacterial outer membrane biogenesis; LPS lipid A biosynthesis. Catalyzes the last two sequential reactions in the de novo biosynthetic pathway for UDP-N-acetylglucosamine (UDP-GlcNAc). The C-terminal domain catalyzes the transfer of acetyl group from acetyl coenzyme A to glucosamine-1-phosphate (GlcN-1-P) to produce N-acetylglucosamine-1-phosphate (GlcNAc-1-P), which is converted into UDP-GlcNAc by the transfer of uridine 5-monophosphate (from uridine 5-triphosphate), a reaction catalyzed by the N-terminal domain. In Rhizobium etli (strain CIAT 652), this protein is Bifunctional protein GlmU.